The following is a 645-amino-acid chain: 1-deoxy-D-xylulose-5-phosphate synthase 2 (645 aa).

Thiamine diphosphate-binding positions include H79 and G120 to S122. Residue D151 participates in Mg(2+) binding. Thiamine diphosphate-binding positions include G152 to S153, N180, Y291, and E373. Mg(2+) is bound at residue N180.

It belongs to the transketolase family. DXPS subfamily. Homodimer. The cofactor is Mg(2+). It depends on thiamine diphosphate as a cofactor.

The enzyme catalyses D-glyceraldehyde 3-phosphate + pyruvate + H(+) = 1-deoxy-D-xylulose 5-phosphate + CO2. It functions in the pathway metabolic intermediate biosynthesis; 1-deoxy-D-xylulose 5-phosphate biosynthesis; 1-deoxy-D-xylulose 5-phosphate from D-glyceraldehyde 3-phosphate and pyruvate: step 1/1. In terms of biological role, catalyzes the acyloin condensation reaction between C atoms 2 and 3 of pyruvate and glyceraldehyde 3-phosphate to yield 1-deoxy-D-xylulose-5-phosphate (DXP). This chain is 1-deoxy-D-xylulose-5-phosphate synthase 2, found in Rhodospirillum rubrum (strain ATCC 11170 / ATH 1.1.1 / DSM 467 / LMG 4362 / NCIMB 8255 / S1).